We begin with the raw amino-acid sequence, 211 residues long: MLTIALSKGRILDDTLPLLAAAGIVPSENPDKSRKLIIPTSLPDVRLLIVRATDVPTYVEHGAADLGVAGKDVLMEYGGQGLYEPLDLRIANCKLMTAGAIGAPEPKGRLRVATKFVNVAKRYYAEQGRQVDVIKLYGSMELAPLVGLADKIIDVVDTGNTLRANGLEPQELIATISSRLVVNKASMKMQHGRIQSLIDTLRDAVEARHRH.

Belongs to the ATP phosphoribosyltransferase family. Short subfamily. Heteromultimer composed of HisG and HisZ subunits.

The protein localises to the cytoplasm. The catalysed reaction is 1-(5-phospho-beta-D-ribosyl)-ATP + diphosphate = 5-phospho-alpha-D-ribose 1-diphosphate + ATP. It functions in the pathway amino-acid biosynthesis; L-histidine biosynthesis; L-histidine from 5-phospho-alpha-D-ribose 1-diphosphate: step 1/9. Catalyzes the condensation of ATP and 5-phosphoribose 1-diphosphate to form N'-(5'-phosphoribosyl)-ATP (PR-ATP). Has a crucial role in the pathway because the rate of histidine biosynthesis seems to be controlled primarily by regulation of HisG enzymatic activity. The chain is ATP phosphoribosyltransferase from Pseudomonas aeruginosa (strain UCBPP-PA14).